A 152-amino-acid chain; its full sequence is UPF0756 membrane protein EF_1246 (152 aa).

Transmembrane regions (helical) follow at residues 4-24, 52-72, 85-105, and 115-135; these read WLFL…SLLI, LGVT…QIGL, WLGI…VGLI, and LVFG…GPII.

This sequence belongs to the UPF0756 family.

It localises to the cell membrane. The polypeptide is UPF0756 membrane protein EF_1246 (Enterococcus faecalis (strain ATCC 700802 / V583)).